We begin with the raw amino-acid sequence, 115 residues long: uncharacterized protein (115 aa).

The tract at residues 1–86 is disordered; it reads RRPARSGGDG…LSSQLVRPSR (86 aa).

This is an uncharacterized protein from Homo sapiens (Human).